A 500-amino-acid chain; its full sequence is Glycerol kinase (500 aa).

Residue T11 participates in ADP binding. Positions 11, 12, and 13 each coordinate ATP. T11 provides a ligand contact to sn-glycerol 3-phosphate. R15 lines the ADP pocket. The sn-glycerol 3-phosphate site is built by R81, E82, Y133, and D242. 5 residues coordinate glycerol: R81, E82, Y133, D242, and Q243. ADP-binding residues include T264 and G307. Residues T264, G307, Q311, and G411 each contribute to the ATP site. Residue G411 participates in ADP binding.

This sequence belongs to the FGGY kinase family.

It carries out the reaction glycerol + ATP = sn-glycerol 3-phosphate + ADP + H(+). Its pathway is polyol metabolism; glycerol degradation via glycerol kinase pathway; sn-glycerol 3-phosphate from glycerol: step 1/1. Inhibited by fructose 1,6-bisphosphate (FBP). In terms of biological role, key enzyme in the regulation of glycerol uptake and metabolism. Catalyzes the phosphorylation of glycerol to yield sn-glycerol 3-phosphate. The chain is Glycerol kinase from Bradyrhizobium sp. (strain ORS 278).